A 912-amino-acid polypeptide reads, in one-letter code: Protein SLFN14 (912 aa).

Positions 206 to 391 are required for endoribonuclease activity; the sequence is ESTHVEFKRF…KVHKFKEALQ (186 aa). Residues 392-571 are required for ribosome binding; it reads RHLFPVTQEE…QMGCEFFNLL (180 aa). 593–600 lines the ATP pocket; it reads CFPGVRKT.

The protein belongs to the Schlafen family. Subgroup III subfamily. Associates with ribosomes in an ATP-independent manner. Mg(2+) is required as a cofactor. The cofactor is Mn(2+). In terms of tissue distribution, expressed in megakaryocytes and platelets (at protein level). Weakly expressed in melanocytes and malignant melanoma cells.

The protein resides in the nucleus. Shows no ribosome-associated and endoribonuclease activities. In terms of biological role, displays polysome-associated endoribonuclease activity towards mRNAs and rRNAs. May play a role in RNA surveillance pathways by recognizing stalled ribosomes and triggering endonucleolytic cleavage of aberrant mRNAs. Cleaves different types of rRNAs and mRNAs in a magnesium- and manganese-dependent and ATP-independent manner. Involved in correct maturation of megakaryocytes and especially important for proplatelet extension. The sequence is that of Protein SLFN14 from Homo sapiens (Human).